Here is a 373-residue protein sequence, read N- to C-terminus: Leucine aminopeptidase 1 (373 aa).

The first 18 residues, 1 to 18 (MKLLSVLALSATASSVLG), serve as a signal peptide directing secretion. Residues 19-75 (ASIPVDTRAEKFLIELAPGETRWVTEEEKWALKESGQDFFDITDEEVGFTAAVAQPA) constitute a propeptide that is removed on maturation. His-176 and Asp-195 together coordinate Zn(2+). N-linked (GlcNAc...) asparagine glycosylation is present at Asn-196. 2 residues coordinate Zn(2+): Glu-234 and Asp-261. N-linked (GlcNAc...) asparagine glycosylation occurs at Asn-288. Residues Cys-310 and Cys-314 are joined by a disulfide bond. A Zn(2+)-binding site is contributed by His-343. N-linked (GlcNAc...) asparagine glycosylation occurs at Asn-348.

It belongs to the peptidase M28 family. M28E subfamily. Monomer. Zn(2+) serves as cofactor.

It localises to the secreted. Extracellular aminopeptidase that allows assimilation of proteinaceous substrates. The polypeptide is Leucine aminopeptidase 1 (LAP1) (Arthroderma gypseum (strain ATCC MYA-4604 / CBS 118893) (Microsporum gypseum)).